We begin with the raw amino-acid sequence, 365 residues long: Peptide chain release factor 2 (365 aa).

Glutamine 252 bears the N5-methylglutamine mark.

It belongs to the prokaryotic/mitochondrial release factor family. In terms of processing, methylated by PrmC. Methylation increases the termination efficiency of RF2.

It localises to the cytoplasm. Functionally, peptide chain release factor 2 directs the termination of translation in response to the peptide chain termination codons UGA and UAA. This Pasteurella multocida (strain Pm70) protein is Peptide chain release factor 2.